Reading from the N-terminus, the 497-residue chain is MORN repeat-containing protein 1 (497 aa).

Residues 1 to 27 are disordered; it reads MAAAGEGTPSSRGPRRDPPRRPPRNGY. 7 MORN repeats span residues 39 to 61, 62 to 84, 86 to 108, 109 to 131, 132 to 154, 155 to 177, and 178 to 200; these read YEGE…DGSY, YEGA…WSGD, FSGQ…AGGC, YEGE…DGQV, YQGS…NGDK, YDGD…DGST, and YKGQ…SGVT. 2 disordered regions span residues 393–425 and 468–497; these read GGRS…ATEE and QPPH…PAPR.

The sequence is that of MORN repeat-containing protein 1 (MORN1) from Homo sapiens (Human).